The chain runs to 216 residues: Imidazole glycerol phosphate synthase subunit HisH (216 aa).

Positions 2 to 216 (RVAIIDYGSG…FIANFLKWKP (215 aa)) constitute a Glutamine amidotransferase type-1 domain. Residue Cys88 is the Nucleophile of the active site. Active-site residues include His196 and Glu198.

In terms of assembly, heterodimer of HisH and HisF.

The protein resides in the cytoplasm. The enzyme catalyses 5-[(5-phospho-1-deoxy-D-ribulos-1-ylimino)methylamino]-1-(5-phospho-beta-D-ribosyl)imidazole-4-carboxamide + L-glutamine = D-erythro-1-(imidazol-4-yl)glycerol 3-phosphate + 5-amino-1-(5-phospho-beta-D-ribosyl)imidazole-4-carboxamide + L-glutamate + H(+). It carries out the reaction L-glutamine + H2O = L-glutamate + NH4(+). It participates in amino-acid biosynthesis; L-histidine biosynthesis; L-histidine from 5-phospho-alpha-D-ribose 1-diphosphate: step 5/9. In terms of biological role, IGPS catalyzes the conversion of PRFAR and glutamine to IGP, AICAR and glutamate. The HisH subunit catalyzes the hydrolysis of glutamine to glutamate and ammonia as part of the synthesis of IGP and AICAR. The resulting ammonia molecule is channeled to the active site of HisF. The protein is Imidazole glycerol phosphate synthase subunit HisH of Brucella melitensis biotype 1 (strain ATCC 23456 / CCUG 17765 / NCTC 10094 / 16M).